A 378-amino-acid chain; its full sequence is Carbamoyl phosphate synthase small chain (378 aa).

Residues 1 to 188 (MLPSFPPAIL…LGRGYGVQDK (188 aa)) are CPSase. Positions 50, 240, and 242 each coordinate L-glutamine. Positions 192–378 (HVVAYDFGVK…FTAAMAERKQ (187 aa)) constitute a Glutamine amidotransferase type-1 domain. Residue Cys268 is the Nucleophile of the active site. Leu269, Gln272, Asn310, Gly312, and Phe313 together coordinate L-glutamine. Catalysis depends on residues His352 and Glu354.

Belongs to the CarA family. In terms of assembly, composed of two chains; the small (or glutamine) chain promotes the hydrolysis of glutamine to ammonia, which is used by the large (or ammonia) chain to synthesize carbamoyl phosphate. Tetramer of heterodimers (alpha,beta)4.

It carries out the reaction hydrogencarbonate + L-glutamine + 2 ATP + H2O = carbamoyl phosphate + L-glutamate + 2 ADP + phosphate + 2 H(+). It catalyses the reaction L-glutamine + H2O = L-glutamate + NH4(+). It participates in amino-acid biosynthesis; L-arginine biosynthesis; carbamoyl phosphate from bicarbonate: step 1/1. It functions in the pathway pyrimidine metabolism; UMP biosynthesis via de novo pathway; (S)-dihydroorotate from bicarbonate: step 1/3. Its function is as follows. Small subunit of the glutamine-dependent carbamoyl phosphate synthetase (CPSase). CPSase catalyzes the formation of carbamoyl phosphate from the ammonia moiety of glutamine, carbonate, and phosphate donated by ATP, constituting the first step of 2 biosynthetic pathways, one leading to arginine and/or urea and the other to pyrimidine nucleotides. The small subunit (glutamine amidotransferase) binds and cleaves glutamine to supply the large subunit with the substrate ammonia. The sequence is that of Carbamoyl phosphate synthase small chain from Ralstonia nicotianae (strain ATCC BAA-1114 / GMI1000) (Ralstonia solanacearum).